Reading from the N-terminus, the 689-residue chain is Glycine--tRNA ligase beta subunit (689 aa).

The protein belongs to the class-II aminoacyl-tRNA synthetase family. Tetramer of two alpha and two beta subunits.

Its subcellular location is the cytoplasm. It catalyses the reaction tRNA(Gly) + glycine + ATP = glycyl-tRNA(Gly) + AMP + diphosphate. This chain is Glycine--tRNA ligase beta subunit, found in Coxiella burnetii (strain RSA 331 / Henzerling II).